Here is a 352-residue protein sequence, read N- to C-terminus: MITPQQAIERLISNNELFYDEMTDLMRQMMSGKVPPEQIAAILTGLRIKVETVSEITAAAAVMREFATKVPLENAEGLVDIVGTGGDGAKTFNISTTSMFVAAAAGAKVAKHGGRSVSSSSGAADVVEQMGANLNLTPEQVAQSIRQTGIGFMFAPNHHSAMRHVAPVRRSLGFRSIFNILGPLTNPAGAPNQLLGVFHTDLCGILSRVLQQLGSKHVLVVCGEGGLDEITLTGKTRVAELKDGKISEYDIRPEDFGIETRRNLDEIKVANTQESLLKMNEVLEGREGAARDIVLLNTAAALYAGNVAASLSDGISAAREAIDSGRAKSKKEEFVGFQPQQRCHFLGKMELG.

5-phospho-alpha-D-ribose 1-diphosphate is bound by residues glycine 83, 86–87 (GD), threonine 91, 93–96 (NIST), 111–119 (KHGGRSVSS), and alanine 123. Anthranilate is bound at residue glycine 83. Serine 95 serves as a coordination point for Mg(2+). Position 169 (arginine 169) interacts with anthranilate. Aspartate 228 and glutamate 229 together coordinate Mg(2+).

It belongs to the anthranilate phosphoribosyltransferase family. As to quaternary structure, homodimer. It depends on Mg(2+) as a cofactor.

It carries out the reaction N-(5-phospho-beta-D-ribosyl)anthranilate + diphosphate = 5-phospho-alpha-D-ribose 1-diphosphate + anthranilate. It participates in amino-acid biosynthesis; L-tryptophan biosynthesis; L-tryptophan from chorismate: step 2/5. In terms of biological role, catalyzes the transfer of the phosphoribosyl group of 5-phosphorylribose-1-pyrophosphate (PRPP) to anthranilate to yield N-(5'-phosphoribosyl)-anthranilate (PRA). This chain is Anthranilate phosphoribosyltransferase, found in Neisseria meningitidis serogroup C (strain 053442).